The chain runs to 670 residues: ATP-dependent RNA helicase DDX18 (670 aa).

2 stretches are compositionally biased toward polar residues: residues 31–42 (SNLTLSETQNGD) and 83–105 (VTKSPQKSTVLTNGEAAMQSSNS). The tract at residues 31-169 (SNLTLSETQN…ESEVPSLPLG (139 aa)) is disordered. A compositionally biased stretch (basic and acidic residues) spans 117-154 (MVNDAEPDTKKAKTENKGKSEEESAETTKETENNVEKP). A Q motif motif is present at residues 179 to 207 (FASLCNLVNENTLKAIKEMGFTNMTEIQH). The Helicase ATP-binding domain occupies 210 to 385 (IRPLLEGRDL…RISLKKEPLY (176 aa)). 223-230 (AKTGSGKT) contributes to the ATP binding site. The DEAD box motif lies at 333–336 (DEAD). A Helicase C-terminal domain is found at 399–569 (GLEQGYVVCP…DIQSQLEKLI (171 aa)).

This sequence belongs to the DEAD box helicase family. DDX18/HAS1 subfamily. In terms of assembly, interacts with NOL8; the interaction is RNA-dependent. Interacts with PRC2 complex components EZH2, SUZ2 and JARID2; these interactions prevent deposition of the repressive H3K27me3 mark onto rDNA in pluripotent cells.

Its subcellular location is the nucleus. The protein resides in the nucleolus. It is found in the chromosome. It carries out the reaction ATP + H2O = ADP + phosphate + H(+). ATP-dependent RNA helicase that plays a role in the regulation of R-loop homeostasis in both endogenous R-loop-prone regions and at sites of DNA damage. At endogenous loci such as actively transcribed genes, may act as a helicase to resolve the formation of R-loop during transcription and prevent the interference of R-loop with DNA-replication machinery. Also participates in the removal of DNA-lesion-associated R-loop. Plays an essential role for establishing pluripotency during embryogenesis and for pluripotency maintenance in embryonic stem cells. Mechanistically, prevents the polycomb repressive complex 2 (PRC2) from accessing rDNA loci and protects the active chromatin status in nucleolus. This Homo sapiens (Human) protein is ATP-dependent RNA helicase DDX18 (DDX18).